A 276-amino-acid polypeptide reads, in one-letter code: Tumor necrosis factor-inducible gene 6 protein (276 aa).

The signal sequence occupies residues 1–17 (MIILIYLFVLVWEEAQG). The Link domain occupies 36–129 (GVYHREARSG…SERWDAYCYN (94 aa)). Disulfide bonds link C58-C127, C82-C103, and C135-C161. The N-linked (GlcNAc...) asparagine glycan is linked to N118. The 113-residue stretch at 135 to 247 (CGGVFTDPKR…GGFQIKYVTV (113 aa)) folds into the CUB domain. Ca(2+) is bound by residues E183, D191, D232, S234, and V235. A disulfide bond links C188 and C210. N-linked (GlcNAc...) asparagine glycosylation occurs at N258.

Interacts (via Link domain) with inter-alpha-inhibitor (I-alpha-I) component bikunin. Interacts with ITIH2/HC2; this interaction is required for transesterification of the HC to hyaluronan. Interacts (via Link and CUB domains) with ITIH1. Chondroitin sulfate may be required for the stability of the complex. Interacts (via Link domain) with various C-X-C and C-C chemokines including PF4, CXCL8, CXCL11, CXCL12, CCL2, CCL7, CCL19, CCL21, and CCL27; this interaction interferes with chemokine binding to glycosaminoglycans. Interacts (primarily via Link domain) with BMP2; this interaction is inhibited by hyaluronan. Interacts (via both Link and CUB domains) with TNFSF11. Interacts (via CUB domain) with FN1 (via type III repeats 9-14); this interaction enhances fibronectin fibril assembly. TNFAIP6 may act as a bridging molecule between FN1 and THBS1. As to expression, vascular smooth muscle cells.

Its subcellular location is the secreted. In terms of biological role, major regulator of extracellular matrix organization during tissue remodeling. Catalyzes the transfer of a heavy chain (HC) from inter-alpha-inhibitor (I-alpha-I) complex to hyaluronan. Cleaves the ester bond between the C-terminus of the HC and GalNAc residue of the chondroitin sulfate chain in I-alpha-I complex followed by transesterification of the HC to hyaluronan. In the process, potentiates the antiprotease function of I-alpha-I complex through release of free bikunin. Acts as a catalyst in the formation of hyaluronan-HC oligomers and hyaluronan-rich matrix surrounding the cumulus cell-oocyte complex, a necessary step for oocyte fertilization. Assembles hyaluronan in pericellular matrices that serve as platforms for receptor clustering and signaling. Enables binding of hyaluronan deposited on the surface of macrophages to LYVE1 on lymphatic endothelium and facilitates macrophage extravasation. Alters hyaluronan binding to functionally latent CD44 on vascular endothelium, switching CD44 into an active state that supports leukocyte rolling. Modulates the interaction of chemokines with extracellular matrix components and proteoglycans on endothelial cell surface, likely preventing chemokine gradient formation. In a negative feedback mechanism, may limit excessive neutrophil recruitment at inflammatory sites by antagonizing the association of CXCL8 with glycosaminoglycans on vascular endothelium. Has a role in osteogenesis and bone remodeling. Inhibits BMP2-dependent differentiation of mesenchymal stem cell to osteoblasts. Protects against bone erosion during inflammation by inhibiting TNFSF11/RANKL-dependent osteoclast activation. This Oryctolagus cuniculus (Rabbit) protein is Tumor necrosis factor-inducible gene 6 protein (TNFAIP6).